A 329-amino-acid polypeptide reads, in one-letter code: Biotin synthase (329 aa).

Residues 48-278 (FLGNGVDLCS…TKKIAVCGGR (231 aa)) form the Radical SAM core domain. Cys-66, Cys-70, and Cys-73 together coordinate [4Fe-4S] cluster. 2 residues coordinate [2Fe-2S] cluster: Ser-143 and Cys-203.

The protein belongs to the radical SAM superfamily. Biotin synthase family. In terms of assembly, homodimer. It depends on [4Fe-4S] cluster as a cofactor. [2Fe-2S] cluster is required as a cofactor.

It carries out the reaction (4R,5S)-dethiobiotin + (sulfur carrier)-SH + 2 reduced [2Fe-2S]-[ferredoxin] + 2 S-adenosyl-L-methionine = (sulfur carrier)-H + biotin + 2 5'-deoxyadenosine + 2 L-methionine + 2 oxidized [2Fe-2S]-[ferredoxin]. It participates in cofactor biosynthesis; biotin biosynthesis; biotin from 7,8-diaminononanoate: step 2/2. Its function is as follows. Catalyzes the conversion of dethiobiotin (DTB) to biotin by the insertion of a sulfur atom into dethiobiotin via a radical-based mechanism. This is Biotin synthase from Geobacter metallireducens (strain ATCC 53774 / DSM 7210 / GS-15).